The following is a 126-amino-acid chain: Anti-adapter protein IraD (126 aa).

It belongs to the GpW/Gp25 family. IraD subfamily. As to quaternary structure, interacts with RssB.

The protein resides in the cytoplasm. Functionally, inhibits RpoS proteolysis by regulating RssB activity, thereby increasing the stability of the sigma stress factor RpoS during oxidative stress. Its effect on RpoS stability is due to its interaction with RssB, which probably blocks the interaction of RssB with RpoS, and the consequent delivery of the RssB-RpoS complex to the ClpXP protein degradation pathway. This Salmonella paratyphi A (strain ATCC 9150 / SARB42) protein is Anti-adapter protein IraD.